A 205-amino-acid polypeptide reads, in one-letter code: Ribosomal RNA large subunit methyltransferase E (205 aa).

Glycine 50, tryptophan 52, aspartate 67, asparagine 83, and aspartate 111 together coordinate S-adenosyl-L-methionine. Lysine 151 (proton acceptor) is an active-site residue.

This sequence belongs to the class I-like SAM-binding methyltransferase superfamily. RNA methyltransferase RlmE family.

The protein localises to the cytoplasm. It catalyses the reaction uridine(2552) in 23S rRNA + S-adenosyl-L-methionine = 2'-O-methyluridine(2552) in 23S rRNA + S-adenosyl-L-homocysteine + H(+). Specifically methylates the uridine in position 2552 of 23S rRNA at the 2'-O position of the ribose in the fully assembled 50S ribosomal subunit. In Thermoplasma acidophilum (strain ATCC 25905 / DSM 1728 / JCM 9062 / NBRC 15155 / AMRC-C165), this protein is Ribosomal RNA large subunit methyltransferase E.